The chain runs to 468 residues: MSSNKTSSFVPWKVATILKHQKTLEAVIQKAFLPGDPAEALNSSQFCETTAALDSTAPCKICQCLHQLCTHHSPDLSFYGDYAIICYYALHAPKTMASNLMLLADCLELIQLYFPDAPSPPPNINGLDIYLHFFVNRCFRLANTEKIMEWSNLDMLKTEFLRATLSGSLSGAFCFKTLWPSLTRAPVRMADECTCTPITNPGCGLDGGKLFHPACIGKDNFLDLILIFWKNTDAMTPANSLLADTLSRHQVYFQNLTPVETNASLDPSPALDTTQGPCLLSPALCLQKKNHTSSLCLLCECLASHSEAASVFQTFKHLVLNSINNKVKLLDRILFLQQDADSLSFIQDRELLKSVLVNCSPQEIHKHLFCDPLCALNSSLTDSVVLFGEVPDFEFTAFKATLATGNSLVHRSFQSCEILETLILLFKSLQTVKANKTTVSEIIKEVDASLKKHKFSLLSCYYTFNIYT.

Zn(2+)-binding residues include Cys-59, Cys-62, His-132, Cys-138, Cys-296, Cys-299, His-367, and Cys-374. Zinc finger regions lie at residues 59-138 (CKIC…VNRC) and 296-374 (CLLC…DPLC).

This sequence belongs to the herpesviridae UL32 protein family.

It localises to the host cytoplasm. The protein localises to the host nucleus. Functionally, plays a role in efficient localization of neo-synthesized capsids to nuclear replication compartments, thereby controlling cleavage and packaging of virus genomic DNA. The chain is Packaging protein UL32 homolog (68) from Connochaetes taurinus (Blue wildebeest).